The following is a 276-amino-acid chain: Mitochondrial outer membrane protein porin of 36 kDa (276 aa).

Belongs to the eukaryotic mitochondrial porin (TC 1.B.8.1) family.

It localises to the mitochondrion outer membrane. In terms of biological role, forms a channel through the cell membrane that allows diffusion of small hydrophilic molecules. The channel adopts an open conformation at low or zero membrane potential and a closed conformation at potentials above 30-40 mV. The open state has a weak anion selectivity whereas the closed state is cation-selective. The chain is Mitochondrial outer membrane protein porin of 36 kDa from Solanum tuberosum (Potato).